Reading from the N-terminus, the 173-residue chain is RNA polymerase sigma factor TcsR (173 aa).

The interval 122-169 (IKDLTQNEKNILRKIYLHGLRESEISRELNISRQAVNKTHLRALEKLK) is sigma-70 factor domain-4. A DNA-binding region (H-T-H motif) is located at residues 143–162 (ESEISRELNISRQAVNKTHL).

This sequence belongs to the sigma-70 factor family.

Functionally, sigma factors are initiation factors that promote the attachment of RNA polymerase to specific initiation sites and are then released. Transcriptional regulator specifically required to activate expression of the toxin gene locus, composed of tcsL and tcdE/utxA. In Paraclostridium sordellii (Clostridium sordellii), this protein is RNA polymerase sigma factor TcsR.